The sequence spans 261 residues: Protein TfpB (261 aa).

The chain is Protein TfpB (tfpB) from Moraxella bovis.